A 118-amino-acid chain; its full sequence is MLVNFLLVGFGAALGAMLRYGISVLVKSKWKTNFPSATFFINITGSFLLGFLVSSALGPVWQLFLGTGFMGGYTTFSTFKVESMELKWKTNYRVLFSYLGFTYVFGLIAAFLGMMLGV.

2 consecutive transmembrane segments (helical) span residues 5 to 25 (FLLV…ISVL) and 47 to 67 (FLLG…FLGT). Gly71 and Thr74 together coordinate Na(+). A helical membrane pass occupies residues 98-118 (YLGFTYVFGLIAAFLGMMLGV).

It belongs to the fluoride channel Fluc/FEX (TC 1.A.43) family.

It is found in the cell membrane. It carries out the reaction fluoride(in) = fluoride(out). With respect to regulation, na(+) is not transported, but it plays an essential structural role and its presence is essential for fluoride channel function. Fluoride-specific ion channel. Important for reducing fluoride concentration in the cell, thus reducing its toxicity. The chain is Fluoride-specific ion channel FluC 1 from Listeria monocytogenes serovar 1/2a (strain ATCC BAA-679 / EGD-e).